A 303-amino-acid chain; its full sequence is Uracil phosphoribosyltransferase (303 aa).

The unknown stretch occupies residues 1–86; it reads MHIIMKTILA…RYVSSTPTDS (86 aa). The UPRTase stretch occupies residues 87-303; it reads LSSKPLAAVY…DRLCGTSNPS (217 aa). Residues Arg170, Arg195, and 222 to 230 each bind 5-phospho-alpha-D-ribose 1-diphosphate; that span reads DPMLATGGS. Uracil contacts are provided by residues Ile285 and 290-292; that span reads GDA. 5-phospho-alpha-D-ribose 1-diphosphate is bound at residue Asp291.

This sequence belongs to the UPRTase family. Mg(2+) serves as cofactor.

The enzyme catalyses UMP + diphosphate = 5-phospho-alpha-D-ribose 1-diphosphate + uracil. It participates in pyrimidine metabolism; UMP biosynthesis via salvage pathway; UMP from uracil: step 1/1. Allosterically activated by GTP. Functionally, catalyzes the conversion of uracil and 5-phospho-alpha-D-ribose 1-diphosphate (PRPP) to UMP and diphosphate. This chain is Uracil phosphoribosyltransferase (upp), found in Chlamydia muridarum (strain MoPn / Nigg).